The sequence spans 485 residues: DNA polymerase subunit gamma-2 (485 aa).

The interval 28 to 65 is disordered; the sequence is GQPELLTERSSPKGGHVKSHAELEGNGEHPEAPGSGEG. Ser-38 bears the Phosphoserine mark. A compositionally biased stretch (basic and acidic residues) spans 46-58; sequence SHAELEGNGEHPE.

As to quaternary structure, heterotrimer composed of a catalytic subunit and a homodimer of accessory subunits (POLG:POLG2).

The protein resides in the mitochondrion. The protein localises to the mitochondrion matrix. It localises to the mitochondrion nucleoid. Functionally, accessory subunit of DNA polymerase gamma solely responsible for replication of mitochondrial DNA (mtDNA). Acts as an allosteric regulator of the holoenzyme activities. Enhances the polymerase activity and the processivity of POLG by increasing its interactions with the DNA template. Suppresses POLG exonucleolytic proofreading especially toward homopolymeric templates bearing mismatched termini. Binds to single-stranded DNA. This is DNA polymerase subunit gamma-2 from Homo sapiens (Human).